A 7760-amino-acid polypeptide reads, in one-letter code: Malpinin synthetase (7760 aa).

Disordered stretches follow at residues 42-115 (ENPE…VNEK) and 161-180 (LDLPTDRPRPSHPSFEGDRV). Over residues 65–79 (TPRSASPLSSYTGSP) the composition is skewed to polar residues. Residues 87–389 (TELSRTLSGD…LSLDERTFLL (303 aa)) are condensation 1. Residues 164–180 (PTDRPRPSHPSFEGDRV) are compositionally biased toward basic and acidic residues. The interval 409-813 (FEQQAERRPH…GRNDHQVKIR (405 aa)) is adenylation 1. The Carrier 1 domain occupies 926–1000 (PPQGELETAI…AFAHAIGQHR (75 aa)). The residue at position 961 (serine 961) is an O-(pantetheine 4'-phosphoryl)serine. Residues 1046 to 1477 (QDIYALAPLQ…VLPADERKLL (432 aa)) form a dual epimerase/condensation (E/C) domain 1 region. Positions 1498–1893 (FEQYADRVPN…GRTDYQVKIR (396 aa)) are adenylation 2. The Carrier 2 domain occupies 2003–2077 (APEGEVENAI…ALAQSIGEHR (75 aa)). Serine 2038 is subject to O-(pantetheine 4'-phosphoryl)serine. The interval 2099–2558 (PLIDLNQNDI…LPTEERQLLT (460 aa)) is dual epimerase/condensation (E/C) domain 2. An adenylation 3 region spans residues 2578 to 2973 (FEQHVDRAPD…GRADFQVKIR (396 aa)). The 75-residue stretch at 3083–3157 (APQGAVEAAI…ALAQSIGEHR (75 aa)) folds into the Carrier 3 domain. Serine 3118 is modified (O-(pantetheine 4'-phosphoryl)serine). Positions 3203–3634 (QDIYALAPLQ…HLNVLPAEER (432 aa)) are dual epimerase/condensation (E/C) domain 3. Residues 3658–4057 (FEQQAERTPD…GRNDDQIKIR (400 aa)) are adenylation 4. The Carrier 4 domain occupies 4174-4248 (APQGEVETAL…AFASRVQEQL (75 aa)). Serine 4209 is subject to O-(pantetheine 4'-phosphoryl)serine. Residues 4267–4705 (LPLSFAQQRL…AAEILSQDER (439 aa)) form a condensation 2 region. An adenylation 5 region spans residues 4729–5133 (FEQRVESTPD…GRNDHQVKIR (405 aa)). Positions 5250 to 5324 (APEGEVETAI…VFAASIGHHQ (75 aa)) constitute a Carrier 5 domain. Serine 5285 is modified (O-(pantetheine 4'-phosphoryl)serine). Residues 5370–5804 (QDIYSLSPLQ…VLPAEERTLL (435 aa)) are dual dehydration/condensation (C*) domain. The segment at 5825–6224 (FEQQSERTPE…GRNDDQVKIR (400 aa)) is adenylation 6. One can recognise a Carrier 6 domain in the interval 6338–6412 (APQGEVETAL…ALAQSIGQHH (75 aa)). Serine 6373 is subject to O-(pantetheine 4'-phosphoryl)serine. The tract at residues 6458 to 6890 (QDIYALSPLQ…QLDTVPAEEH (433 aa)) is dual epimerase/condensation (E/C) domain 4. The segment at 6914 to 7300 (FEHQVERTPA…KFLPDGNVVC (387 aa)) is adenylation 7. Residues 7428 to 7503 (EPRGAIENIL…ELAPRLLATG (76 aa)) form the Carrier 7 domain. An O-(pantetheine 4'-phosphoryl)serine modification is found at serine 7463. The segment at 7561-7722 (DNGNMASSLD…KPYVQGSIEV (162 aa)) is thioesterase (TE) domain.

The protein belongs to the NRP synthetase family.

Functionally, heptamodular nonribosomal peptide synthetase that catalyzes the biosynthesis of malpinins, natural products that show biosurfactant activities. Malpinins are acetylated hexapeptides (Ac-D-Leu/Val-D-Arg-D-Leu/Val-L-Phe/Leu-Dhb-D-Trp) containing a non-canonical amino acid derived from dehydration of L-Trp, (Z)-dehydrobutyrine (Dhb), at position 5, as well as a C-terminal D-amino acid, D-tryptophan, that can be oxidized to kynurenine. Incorporated D-amino acids in positions 1, 3 and 4 are variable resulting in the malpinin A-congeners malpinin B to E. Both modules M1 and M3 have relaxed specificity towards aliphatic amino acids (L-Leu &gt; L-Met &gt; L/D-Val &gt; L-Cys), explaining Val at position 1 and 3 in malpinin A-congeners malpinin B to D. The incorporation of L-Leu, but not N-acetyl-L-Leu by module 1 suggests the N-terminal acetylation occurs at a later stage of biosynthesis. Similar to M1 and M3, M4 has a broad substrate spectrum showing the highest activity with L-Phe followed by other hydrophobic amino acids (L-Phe &gt; L-Met = L-Trp). In contrast, M2, M5 and M6 are highly specific for L-Arg, L-Thr, and L-Trp, respectively. Solely, M7 converted its preferred substrate (L-Phe) with a 15 000-fold reduced turnover rate compared to the most active module M6, indicating that its A domain cannot contribute to the malpinin biosynthesis due to low activity. Since the last T domain in malA is apparently not loaded with an amino acid, either the TE domain must offload the oligopeptide from the preceding T domain or the dual E/C domain of M7 must transfer the final peptide chain to the free acceptor T domain of M7 prior to release. This Mortierella alpina (Oleaginous fungus) protein is Malpinin synthetase.